The primary structure comprises 263 residues: Proline rich transmembrane protein 1B (263 aa).

Over residues 1–17 (MEAGAGGAGSDTKGGGS) the composition is skewed to gly residues. The disordered stretch occupies residues 1 to 107 (MEAGAGGAGS…IGFVGEPPPY (107 aa)). Composition is skewed to low complexity over residues 37–47 (QMPAQPALPQL) and 75–86 (DAPAQAAGEAGP). 2 helical membrane passes run 190 to 210 (MMESVLVTLFCCLLTGLIAIV) and 238 to 258 (VLFSLLFGVFVSTSWVIYVVV).

The protein belongs to the CD225/Dispanin family.

The protein resides in the membrane. The polypeptide is Proline rich transmembrane protein 1B (Homo sapiens (Human)).